The primary structure comprises 310 residues: MALSSRLWRLLPLLRGAEQSVCQLARSWGSGGRCGTWGFRGSEVTGNTRAFKRGLLFSALSYLGFETYQVISQAAVVHATAKVEEILEQADYLYESGETEKLYQLLTQYKESEDVELLWRLARASRDIAQLCKTSEEEKKVLLYEALEYAKRALEKKGSSFAAHKWYAICISDVGDYEGIKVKIANAYVIKEHFEKAIELNPKDATSIHLMGIWCYTFAEMPWYQRRIAEVLFANPPSSTYEEALKYFHRAEEVDPNFYSKNLLLLGKTYLKLNNKKLAAFWLVKAKSYPAHTEEDKQIQTEAAQLLTGL.

K165 is modified (N6-succinyllysine). 2 TPR repeats span residues 168–204 (AICISDVGDYEGIKVKIANAYVIKEHFEKAIELNPKD) and 222–258 (PWYQRRIAEVLFANPPSSTYEEALKYFHRAEEVDPNF).

Belongs to the RMDN family. As to quaternary structure, interacts with microtubules.

It localises to the cytoplasm. The protein localises to the cytoskeleton. It is found in the spindle. The protein resides in the spindle pole. The protein is Regulator of microtubule dynamics protein 1 (Rmdn1) of Rattus norvegicus (Rat).